We begin with the raw amino-acid sequence, 28 residues long: Toxin a (28 aa).

In terms of domain architecture, LCN-type CS-alpha/beta spans 3–28; sequence VPGNYPLDSYGNCYPCTILGDNQYCI.

Belongs to the long (3 C-C) scorpion toxin superfamily. As to expression, expressed by the venom gland.

The protein localises to the secreted. Binds to sodium channels (Nav) and affects the channel activation process. This chain is Toxin a, found in Androctonus crassicauda (Arabian fat-tailed scorpion).